Here is a 478-residue protein sequence, read N- to C-terminus: MQVQPTKYVGLVADLMPNIRLMQASGHFLFRYVTGPILIRKVYSWWTLAMVLIQFFAILGNLATNADDVNELTANTITTLFFTHSVTKFIYFAVNSENFYRTLAIWNQTNTHPLFAESDARYHSIALAKMRKLLVLVMATTVLSVVAWVTITFFGESVKTVLDKATNETYTVDIPRLPIKSWYPWNAMSGPAYIFSFIYQIYFLLFSMVQSNLADVMFCSWLLLACEQLQHLKGIMRSLMELSASLDTYRPNSSQLFRAISAGSKSELIINEEKDPDVKDFDLSGIYSSKADWGAQFRAPSTLQTFDENGRNGNPNGLTRKQEMMVRSAIKYWVERHKHVVRLVSAIGDTYGPALLLHMLTSTIKLTLLAYQATKIDGVNVYGLTVIGYLCYALAQVFLFCIFGNRLIEESSSVMEAAYSCHWYDGSEEAKTFVQIVCQQCQKAMTISGAKFFTVSLDLFASVLGAVVTYFMVLVQLK.

Residues 1–41 (MQVQPTKYVGLVADLMPNIRLMQASGHFLFRYVTGPILIRK) are Cytoplasmic-facing. A helical transmembrane segment spans residues 42–62 (VYSWWTLAMVLIQFFAILGNL). The Extracellular portion of the chain corresponds to 63–73 (ATNADDVNELT). A helical membrane pass occupies residues 74-94 (ANTITTLFFTHSVTKFIYFAV). Topologically, residues 95–133 (NSENFYRTLAIWNQTNTHPLFAESDARYHSIALAKMRKL) are cytoplasmic. A helical membrane pass occupies residues 134 to 154 (LVLVMATTVLSVVAWVTITFF). The Extracellular segment spans residues 155 to 188 (GESVKTVLDKATNETYTVDIPRLPIKSWYPWNAM). Asparagine 167 carries an N-linked (GlcNAc...) asparagine glycan. Residues 189-209 (SGPAYIFSFIYQIYFLLFSMV) traverse the membrane as a helical segment. The Cytoplasmic segment spans residues 210–338 (QSNLADVMFC…AIKYWVERHK (129 aa)). A helical transmembrane segment spans residues 339 to 361 (HVVRLVSAIGDTYGPALLLHMLT). Residues 362 to 382 (STIKLTLLAYQATKIDGVNVY) are Extracellular-facing. Residues 383 to 403 (GLTVIGYLCYALAQVFLFCIF) form a helical membrane-spanning segment. Residues 404–454 (GNRLIEESSSVMEAAYSCHWYDGSEEAKTFVQIVCQQCQKAMTISGAKFFT) are Cytoplasmic-facing. The helical transmembrane segment at 455–475 (VSLDLFASVLGAVVTYFMVLV) threads the bilayer. The Extracellular portion of the chain corresponds to 476-478 (QLK).

It belongs to the insect chemoreceptor superfamily. Heteromeric odorant receptor channel (TC 1.A.69) family. Orco subfamily. As to quaternary structure, heterodimer with conventional odorant receptors (ORs). Complexes exist early in the endomembrane system in olfactory sensory neurons (OSNs), coupling these complexes to the conserved ciliary trafficking pathway. Expressed in olfactory and gustatory organs of both adult and immature stages. Highest expression is seen in adult antennae and the maxillary palps. Lower expression also seen in proboscis and legs. Within the antenna, expression originates in cell bodies and projects into the lumen of an individual sensillum, presumably along the dendritic extension of the neuron. Within the maxillary palps, expression is seen in a small number of cell bodies and in projections into the sensillar cone. Within the probiscus, expression is seen in a single type of sensillum on the outer surface of the labellar lobes.

It is found in the cell membrane. Odorant coreceptor which complexes with conventional odorant receptors (ORs) to form odorant-sensing units, providing sensitive and prolonged odorant signaling and calcium permeability. Orco is a universal and integral part of the functional odorant receptor, involved in the dendritic localization of other olfactory receptors. Can form functional ion channels in the absence of an odor-binding OR. Plays a key role in preferred attraction of females for humans over non-human hosts for blood feeding. Human attraction plays a crucial role in the transmission of Plasmodium protozoans by the mosquito leading to infection diseases like malaria. Also required for the response to N,N-Diethyl-meta-toluamide (DEET), the most widely used insect repellent worldwide. The protein is Odorant receptor coreceptor (Orco) of Anopheles gambiae (African malaria mosquito).